Consider the following 305-residue polypeptide: Oxidoreductase OpS7 (305 aa).

This sequence belongs to the oxidoreductase OpS7 family.

It functions in the pathway secondary metabolite biosynthesis. Oxidoreductase; part of the gene cluster that mediates the biosynthesis of the bibenzoquinone oosporein, a metabolite required for fungal virulence that acts by evading host immunity to facilitate fungal multiplication in insects. The non-reducing polyketide synthase OpS1 produces orsellinic acid by condensing acetyl-CoA with 3 malonyl-CoA units. Orsellinic acid is then hydroxylated to benzenetriol by the hydroxylase OpS4. The intermediate is oxidized either nonenzymatically to 5,5'-dideoxy-oosporein or enzymatically to benzenetetrol by the oxidoreductase OpS7. The latter is further dimerized to oosporein by the catalase OpS5. OpS6 probably functions en route for protecting cells against oxidative stress by scavenging any leaked free radical form of benzenetetrol by activating the thiol group of glutathione. The chain is Oxidoreductase OpS7 from Beauveria bassiana (strain ARSEF 2860) (White muscardine disease fungus).